The following is a 165-amino-acid chain: 3-isopropylmalate dehydratase small subunit (165 aa).

The protein belongs to the LeuD family. LeuD type 2 subfamily. As to quaternary structure, heterodimer of LeuC and LeuD.

It carries out the reaction (2R,3S)-3-isopropylmalate = (2S)-2-isopropylmalate. It participates in amino-acid biosynthesis; L-leucine biosynthesis; L-leucine from 3-methyl-2-oxobutanoate: step 2/4. In terms of biological role, catalyzes the isomerization between 2-isopropylmalate and 3-isopropylmalate, via the formation of 2-isopropylmaleate. The chain is 3-isopropylmalate dehydratase small subunit from Saccharolobus islandicus (strain Y.N.15.51 / Yellowstone #2) (Sulfolobus islandicus).